A 411-amino-acid chain; its full sequence is MRAERTSFLLALGLLVAGIRSVHCLPENVVVKDQHRRVDGHTLASSNTDFAFSLYKQLALKNPNKNVILSPLSVSIALAFLSLGARGSTLTEILEGLKFNLTEIQEKEIHHSFQHLLQALNQPSNQLQLSVGNAMFVQEELKLLDKFIEDAQVLYSSEAFPTNFRDSEAARSLINDYVKNKTQGKIEELFKYLSPRTELVLVNYIYFKAQWKTPFDPKHTEQAEFHVSDNKTVEVPMMTLDLETPYFRDEELGCTLVELTYTSNDSALFILPDEGKMRDLEAKLTPETLTRWRNSLQPRRIHELYLPKFSIKSNYELNDILSQLGIRKIFANADLSGITGTADLVVSQVVHGAALDVDEEGTEGAAATGISMERTILRIIVRVNRPFLIAIVLKDTQSIIFLGKVTNPSEA.

Residues 1–24 (MRAERTSFLLALGLLVAGIRSVHC) form the signal peptide. Residues Asn100, Asn180, Asn230, and Asn264 are each glycosylated (N-linked (GlcNAc...) asparagine).

Belongs to the serpin family. As to quaternary structure, homodimer. In terms of processing, N-glycosylated. In terms of tissue distribution, detected in all tissues examined (at protein level). Abundantly expressed in liver, kidney and spleen. Lowest levels were observed in diaphragm muscle.

Its subcellular location is the cytoplasmic vesicle. The protein resides in the secretory vesicle. It localises to the chromaffin granule. It is found in the secreted. In terms of biological role, potent inhibitor of the serine proteases elastase and trypsin. Moderately inhibits the serine proteases plasmin and chymotrypsin, and the thiol protease proenkephalin-processing enzyme. Does not inhibit the serine proteases cathepsin G, furin, kallikrein, thrombin, tissue plasminogen activator and urokinase, or the cysteine proteases cathepsin B, cathepsin L and papain. The sequence is that of Serpin A3-1 from Bos taurus (Bovine).